We begin with the raw amino-acid sequence, 173 residues long: Crossover junction endodeoxyribonuclease RuvC (173 aa).

Residues Asp8, Glu67, and Asp139 contribute to the active site. Residues Asp8, Glu67, and Asp139 each contribute to the Mg(2+) site.

This sequence belongs to the RuvC family. In terms of assembly, homodimer which binds Holliday junction (HJ) DNA. The HJ becomes 2-fold symmetrical on binding to RuvC with unstacked arms; it has a different conformation from HJ DNA in complex with RuvA. In the full resolvosome a probable DNA-RuvA(4)-RuvB(12)-RuvC(2) complex forms which resolves the HJ. It depends on Mg(2+) as a cofactor.

Its subcellular location is the cytoplasm. The enzyme catalyses Endonucleolytic cleavage at a junction such as a reciprocal single-stranded crossover between two homologous DNA duplexes (Holliday junction).. Its function is as follows. The RuvA-RuvB-RuvC complex processes Holliday junction (HJ) DNA during genetic recombination and DNA repair. Endonuclease that resolves HJ intermediates. Cleaves cruciform DNA by making single-stranded nicks across the HJ at symmetrical positions within the homologous arms, yielding a 5'-phosphate and a 3'-hydroxyl group; requires a central core of homology in the junction. The consensus cleavage sequence is 5'-(A/T)TT(C/G)-3'. Cleavage occurs on the 3'-side of the TT dinucleotide at the point of strand exchange. HJ branch migration catalyzed by RuvA-RuvB allows RuvC to scan DNA until it finds its consensus sequence, where it cleaves and resolves the cruciform DNA. The protein is Crossover junction endodeoxyribonuclease RuvC of Salmonella choleraesuis (strain SC-B67).